The chain runs to 640 residues: Chaperone protein HtpG (640 aa).

Residues 1-348 (MADVAHQETH…SNDLPLNVSR (348 aa)) are a; substrate-binding. The segment at 349-565 (EILQDNKITQ…GTGMSTQMIK (217 aa)) is b. The interval 566–640 (LMQAAGQPVP…LNTLLMNLAK (75 aa)) is c.

The protein belongs to the heat shock protein 90 family. Homodimer.

Its subcellular location is the cytoplasm. In terms of biological role, molecular chaperone. Has ATPase activity. This Pseudoalteromonas atlantica (strain T6c / ATCC BAA-1087) protein is Chaperone protein HtpG.